The sequence spans 411 residues: Tyrosine--tRNA ligase (411 aa).

An L-tyrosine-binding site is contributed by tyrosine 36. The short motif at proline 41 to histidine 50 is the 'HIGH' region element. L-tyrosine contacts are provided by tyrosine 172 and glutamine 176. The 'KMSKS' region motif lies at lysine 232–threonine 236. Residue lysine 235 coordinates ATP. An S4 RNA-binding domain is found at tyrosine 344 to isoleucine 409.

It belongs to the class-I aminoacyl-tRNA synthetase family. TyrS type 1 subfamily. As to quaternary structure, homodimer.

Its subcellular location is the cytoplasm. The enzyme catalyses tRNA(Tyr) + L-tyrosine + ATP = L-tyrosyl-tRNA(Tyr) + AMP + diphosphate + H(+). Catalyzes the attachment of tyrosine to tRNA(Tyr) in a two-step reaction: tyrosine is first activated by ATP to form Tyr-AMP and then transferred to the acceptor end of tRNA(Tyr). The chain is Tyrosine--tRNA ligase from Malacoplasma penetrans (strain HF-2) (Mycoplasma penetrans).